The following is a 450-amino-acid chain: Probable ECA polymerase (450 aa).

11 consecutive transmembrane segments (helical) span residues 6 to 26, 37 to 57, 63 to 83, 118 to 138, 155 to 175, 181 to 201, 207 to 227, 228 to 248, 341 to 361, 378 to 398, and 410 to 430; these read FSGLFVVWLLCTLFIATLTWF, VFFSLLFLLTFFFGFPLTSVL, VGVAPPEILLQALLSAGCFYA, VILMGIALVSVGIFFMHNGFL, GVALKRFFYFFIPAMLVVYFL, AWLFFLVSTVAFGLLTYMIVG, IIIAFAIFLFIGIIRGWISLW, MLAAAGVLGIVGMFWLALKRY, LVVMGGALFIPLGAIVVGLII, YKAAILHSFCFGAIFNMIVLA, and VFFIVVFGACLMIAKLLYWLF.

This sequence belongs to the WzyE family. As to quaternary structure, probably part of a complex composed of WzxE, WzyE and WzzE.

The protein resides in the cell inner membrane. It functions in the pathway bacterial outer membrane biogenesis; enterobacterial common antigen biosynthesis. Its function is as follows. Probably involved in the polymerization of enterobacterial common antigen (ECA) trisaccharide repeat units. The chain is Probable ECA polymerase from Shigella sonnei (strain Ss046).